The primary structure comprises 185 residues: Pyruvate/ketoisovalerate oxidoreductases common subunit gamma (185 aa).

As to quaternary structure, heterotetramer of one alpha, one beta, one delta and one gamma chain.

It carries out the reaction 2 oxidized [2Fe-2S]-[ferredoxin] + pyruvate + CoA = 2 reduced [2Fe-2S]-[ferredoxin] + acetyl-CoA + CO2 + H(+). It catalyses the reaction 3-methyl-2-oxobutanoate + 2 oxidized [2Fe-2S]-[ferredoxin] + CoA = 2-methylpropanoyl-CoA + 2 reduced [2Fe-2S]-[ferredoxin] + CO2 + H(+). The chain is Pyruvate/ketoisovalerate oxidoreductases common subunit gamma (porG) from Thermococcus kodakarensis (strain ATCC BAA-918 / JCM 12380 / KOD1) (Pyrococcus kodakaraensis (strain KOD1)).